Here is a 624-residue protein sequence, read N- to C-terminus: Methyl-accepting chemotaxis protein McpG (624 aa).

The chain crosses the membrane as a helical span at residues 11–31 (ILLAASLIVILAFSLFTLYND). A Cache domain is found at 36 to 254 (NAIREDLENY…GLPSANWYIG (219 aa)). The helical transmembrane segment at 272–292 (SAVIATVVAVVIIIGLLGLLI) threads the bilayer. One can recognise an HAMP domain in the interval 293-347 (RVLMQPLHTMTRAMEDIAEGEGDLTKRLHIHSHDEFGVLGNAFNRFVERIHSSIR). The 237-residue stretch at 352-588 (ATEQVNEVAL…AINMDINEIN (237 aa)) folds into the Methyl-accepting transducer domain.

It belongs to the methyl-accepting chemotaxis (MCP) protein family.

The protein localises to the cell membrane. Functionally, chemotactic-signal transducers respond to changes in the concentration of attractants and repellents in the environment, transduce a signal from the outside to the inside of the cell, and facilitate sensory adaptation through the variation of the level of methylation. McpG is a specific gamma-aminobutyric acid (GABA) chemoreceptor that recognizes GABA over a wide range of environmental conditions. Contributes to attraction to and colonization of plant roots. The protein is Methyl-accepting chemotaxis protein McpG of Pseudomonas putida (strain ATCC 47054 / DSM 6125 / CFBP 8728 / NCIMB 11950 / KT2440).